The sequence spans 489 residues: Phosphoenolpyruvate carboxykinase (ATP) (489 aa).

Substrate contacts are provided by arginine 53 and tyrosine 159. ATP contacts are provided by residues histidine 185, 208–216 (GLSGTGKTT), aspartate 258, arginine 300, 409–410 (KI), and serine 415. Position 300 (arginine 300) interacts with substrate.

This sequence belongs to the phosphoenolpyruvate carboxykinase (ATP) family.

It localises to the cytoplasm. It carries out the reaction oxaloacetate + ATP = phosphoenolpyruvate + ADP + CO2. It participates in carbohydrate biosynthesis; gluconeogenesis. Its function is as follows. Involved in the gluconeogenesis. Catalyzes the conversion of oxaloacetate (OAA) to phosphoenolpyruvate (PEP) through direct phosphoryl transfer between the nucleoside triphosphate and OAA. The protein is Phosphoenolpyruvate carboxykinase (ATP) of Aeropyrum pernix (strain ATCC 700893 / DSM 11879 / JCM 9820 / NBRC 100138 / K1).